The following is an 80-amino-acid chain: Ataxin-8 (80 aa).

In terms of tissue distribution, specifically found in brains from SCA8 patients (at protein level).

The protein resides in the nucleus. This chain is Ataxin-8 (ATXN8), found in Homo sapiens (Human).